We begin with the raw amino-acid sequence, 483 residues long: Triacylglycerol lipase ptl3 (483 aa).

A PNPLA domain is found at 141-340; it reads LILSGGGTFG…DNDIPHAKLT (200 aa). The short motif at 145–150 is the GXGXXG element; the sequence is GGGTFG. The short motif at 172-176 is the GXSXG element; sequence GSSAG. Catalysis depends on serine 174, which acts as the Nucleophile. Catalysis depends on aspartate 327, which acts as the Proton acceptor.

It is found in the cytoplasm. Its subcellular location is the lipid droplet. The catalysed reaction is a triacylglycerol + H2O = a diacylglycerol + a fatty acid + H(+). Lipid particle-localized triacylglycerol (TAG) lipase. The lipid droplet/particle is a lipid storage compartment which serves as a depot of energy and building blocks for membrane lipid biosynthesis. Involved in the mobilization of the non-polar storage lipids triacylglycerols (TAGs) from lipid particles by hydrolysis of TAGs, releasing and supplying specific fatty acids to the appropriate metabolic pathways. This is Triacylglycerol lipase ptl3 (ptl3) from Schizosaccharomyces pombe (strain 972 / ATCC 24843) (Fission yeast).